The chain runs to 497 residues: Guanosine-5'-triphosphate,3'-diphosphate pyrophosphatase (497 aa).

This sequence belongs to the GppA/Ppx family. GppA subfamily.

The enzyme catalyses guanosine 3'-diphosphate 5'-triphosphate + H2O = guanosine 3',5'-bis(diphosphate) + phosphate + H(+). Its pathway is purine metabolism; ppGpp biosynthesis; ppGpp from GTP: step 2/2. Functionally, catalyzes the conversion of pppGpp to ppGpp. Guanosine pentaphosphate (pppGpp) is a cytoplasmic signaling molecule which together with ppGpp controls the 'stringent response', an adaptive process that allows bacteria to respond to amino acid starvation, resulting in the coordinated regulation of numerous cellular activities. The chain is Guanosine-5'-triphosphate,3'-diphosphate pyrophosphatase from Photobacterium profundum (strain SS9).